The sequence spans 189 residues: Phosphoheptose isomerase (189 aa).

Residues 33–189 enclose the SIS domain; the sequence is CTDTLKAGNK…ELVEREIYGG (157 aa). 48 to 50 serves as a coordination point for substrate; sequence NGG. Positions 57 and 61 each coordinate Zn(2+). Substrate contacts are provided by residues Glu-61, 90 to 91, 116 to 118, Ser-121, and Gln-168; these read ND and STS. Positions 168 and 176 each coordinate Zn(2+).

The protein belongs to the SIS family. GmhA subfamily. It depends on Zn(2+) as a cofactor.

The protein localises to the cytoplasm. It catalyses the reaction 2 D-sedoheptulose 7-phosphate = D-glycero-alpha-D-manno-heptose 7-phosphate + D-glycero-beta-D-manno-heptose 7-phosphate. It participates in carbohydrate biosynthesis; D-glycero-D-manno-heptose 7-phosphate biosynthesis; D-glycero-alpha-D-manno-heptose 7-phosphate and D-glycero-beta-D-manno-heptose 7-phosphate from sedoheptulose 7-phosphate: step 1/1. Catalyzes the isomerization of sedoheptulose 7-phosphate in D-glycero-D-manno-heptose 7-phosphate. This Akkermansia muciniphila (strain ATCC BAA-835 / DSM 22959 / JCM 33894 / BCRC 81048 / CCUG 64013 / CIP 107961 / Muc) protein is Phosphoheptose isomerase.